The chain runs to 1138 residues: 2'-5'-oligoadenylate synthase 3 (1138 aa).

Position 1 is an N-acetylmethionine (methionine 1). Residues 6–341 form an OAS domain 1 region; sequence TPAGALDKLV…GVLVQPWEGP (336 aa). Interaction with dsRNA stretches follow at residues 12–56 and 185–199; these read DKLV…VIRI and EPRKNFVNTRPAKLK. The linker stretch occupies residues 342-462; it reads GLPRAGILDL…GSRMSPDLSQ (121 aa). The span at 370-379 shows a compositional bias: basic and acidic residues; sequence LAVQSKERSQ. Disordered stretches follow at residues 370 to 403 and 434 to 459; these read LAVQSKERSQKPSNSAPGFPEAATKIPAMPNPSA and TQSTASSHMPPDRSSISTAGSRMSPD. Residues 447–459 are compositionally biased toward polar residues; sequence SSISTAGSRMSPD. OAS domain stretches follow at residues 463 to 793 and 801 to 1135; these read IPSK…PWDV and TLAE…WPVK. Residue serine 855 coordinates ATP. Mg(2+) is bound by residues aspartate 867, aspartate 869, and aspartate 939. ATP is bound by residues arginine 998, lysine 1001, and glutamine 1020.

The protein belongs to the 2-5A synthase family. As to quaternary structure, monomer. It depends on Mg(2+) as a cofactor. Intestine.

Its subcellular location is the cytoplasm. It localises to the nucleus. It carries out the reaction 3 ATP = 5'-triphosphoadenylyl-(2'-&gt;5')-adenylyl-(2'-&gt;5')-adenosine + 2 diphosphate. Produced as a latent enzyme which is activated by dsRNA generated during the course of viral infection. Strongly activated by long dsRNAs at least 50 nucleotides in length. ssRNA does not activate the enzyme. Interferon-induced, dsRNA-activated antiviral enzyme which plays a critical role in cellular innate antiviral response. In addition, it may also play a role in other cellular processes such as apoptosis, cell growth, differentiation and gene regulation. Synthesizes preferentially dimers of 2'-5'-oligoadenylates (2-5A) from ATP which then bind to the inactive monomeric form of ribonuclease L (RNase L) leading to its dimerization and subsequent activation. Activation of RNase L leads to degradation of cellular as well as viral RNA, resulting in the inhibition of protein synthesis, thus terminating viral replication. Can mediate the antiviral effect via the classical RNase L-dependent pathway or an alternative antiviral pathway independent of RNase L. The sequence is that of 2'-5'-oligoadenylate synthase 3 (Oas3) from Mus musculus (Mouse).